We begin with the raw amino-acid sequence, 430 residues long: Serine--tRNA ligase (430 aa).

L-serine is bound at residue 238–240 (TAE). 269 to 271 (RRE) serves as a coordination point for ATP. L-serine is bound at residue Glu292. 356–359 (EISS) serves as a coordination point for ATP. Ser392 contacts L-serine.

Belongs to the class-II aminoacyl-tRNA synthetase family. Type-1 seryl-tRNA synthetase subfamily. In terms of assembly, homodimer. The tRNA molecule binds across the dimer.

The protein localises to the cytoplasm. The catalysed reaction is tRNA(Ser) + L-serine + ATP = L-seryl-tRNA(Ser) + AMP + diphosphate + H(+). The enzyme catalyses tRNA(Sec) + L-serine + ATP = L-seryl-tRNA(Sec) + AMP + diphosphate + H(+). Its pathway is aminoacyl-tRNA biosynthesis; selenocysteinyl-tRNA(Sec) biosynthesis; L-seryl-tRNA(Sec) from L-serine and tRNA(Sec): step 1/1. Catalyzes the attachment of serine to tRNA(Ser). Is also able to aminoacylate tRNA(Sec) with serine, to form the misacylated tRNA L-seryl-tRNA(Sec), which will be further converted into selenocysteinyl-tRNA(Sec). This chain is Serine--tRNA ligase, found in Synechocystis sp. (strain ATCC 27184 / PCC 6803 / Kazusa).